The sequence spans 321 residues: MTKYALVGDVGGTNARLALCDIASGEISQAKTYSGLDYPSLEAVVRVYLDEHSVSVEDGCIAIACPITGDWVAMTNHTWAFSIAEMKKNLGFSHLEIINDFTAVSMAIPMLKKEHLIQFGGGEPVDGKPIAVYGAGTGLGVAHLVHVDKRWISLPGEGGHVDFAPNSEEEAMILEILRAEIGHVSAERVLSGPGLVNLYRAIVKSDNRLPENLRPKDITERALADNCIDCRRALSLFCVIMGRFGGDLALTMGTFGGVYIAGGIVPRFLEFFKASGFRGGFEDKGRFKDYVHGIPVYLIVHDNPGLLGSGAHLRQTLGHIL.

ATP is bound at residue 8-13; it reads GDVGGT.

The protein belongs to the bacterial glucokinase family.

It localises to the cytoplasm. It carries out the reaction D-glucose + ATP = D-glucose 6-phosphate + ADP + H(+). The polypeptide is Glucokinase (Salmonella choleraesuis (strain SC-B67)).